Here is a 240-residue protein sequence, read N- to C-terminus: Uridylate kinase (240 aa).

Position 12 to 15 (12 to 15 (KLSG)) interacts with ATP. The interval 20–25 (GEQGFG) is involved in allosteric activation by GTP. A UMP-binding site is contributed by Gly-54. Residues Gly-55 and Arg-59 each contribute to the ATP site. Residues Asp-74 and 135 to 142 (TGNPYFST) contribute to the UMP site. ATP-binding residues include Asn-163, Tyr-169, and Asp-172.

The protein belongs to the UMP kinase family. As to quaternary structure, homohexamer.

It is found in the cytoplasm. The enzyme catalyses UMP + ATP = UDP + ADP. Its pathway is pyrimidine metabolism; CTP biosynthesis via de novo pathway; UDP from UMP (UMPK route): step 1/1. With respect to regulation, allosterically activated by GTP. Inhibited by UTP. Its function is as follows. Catalyzes the reversible phosphorylation of UMP to UDP. The sequence is that of Uridylate kinase from Bacillus cereus (strain ATCC 14579 / DSM 31 / CCUG 7414 / JCM 2152 / NBRC 15305 / NCIMB 9373 / NCTC 2599 / NRRL B-3711).